We begin with the raw amino-acid sequence, 173 residues long: Flagellar biosynthetic protein FliV (173 aa).

The protein belongs to the FliB family.

Required for the secretion of flagellin and expression of motility. The polypeptide is Flagellar biosynthetic protein FliV (fliV) (Salmonella muenchen).